A 120-amino-acid polypeptide reads, in one-letter code: Ribosome-binding factor A (120 aa).

This sequence belongs to the RbfA family. As to quaternary structure, monomer. Binds 30S ribosomal subunits, but not 50S ribosomal subunits or 70S ribosomes.

The protein resides in the cytoplasm. Functionally, one of several proteins that assist in the late maturation steps of the functional core of the 30S ribosomal subunit. Associates with free 30S ribosomal subunits (but not with 30S subunits that are part of 70S ribosomes or polysomes). Required for efficient processing of 16S rRNA. May interact with the 5'-terminal helix region of 16S rRNA. The protein is Ribosome-binding factor A of Limosilactobacillus fermentum (strain NBRC 3956 / LMG 18251) (Lactobacillus fermentum).